The primary structure comprises 179 residues: Cytoglobin-2 (179 aa).

Over residues 1-11 (MEKEREDEETE) the composition is skewed to acidic residues. The segment at 1–20 (MEKEREDEETEGRERPEPLT) is disordered. The region spanning 18–167 (PLTDVERGII…LYWHITGAYT (150 aa)) is the Globin domain. Heme b is bound by residues His81 and His113.

It belongs to the globin family. As to quaternary structure, monomeric. In terms of tissue distribution, expressed in all tissues examined, with highest levels in brain and eye, and considerably lower levels in skin, gut, heart, gill, liver and muscle.

Its subcellular location is the cytoplasm. The protein localises to the nucleus. It carries out the reaction Fe(II)-heme b-[protein] + nitric oxide + O2 = Fe(III)-heme b-[protein] + nitrate. It catalyses the reaction Fe(III)-heme b-[protein] + nitric oxide + H2O = Fe(II)-heme b-[protein] + nitrite + 2 H(+). The catalysed reaction is 2 superoxide + 2 H(+) = H2O2 + O2. The enzyme catalyses H2O2 + AH2 = A + 2 H2O. In terms of biological role, probable multifunctional globin with a hexacoordinated heme iron required for the catalysis of various reactions depending on redox condition of the cell as well as oxygen availability. Has a nitric oxide dioxygenase (NOD) activity and is most probably involved in cell-mediated and oxygen-dependent nitric oxide consumption. Under normoxic conditions functions as a nitric oxide dioxygenase (NOD) but under hypoxic conditions the globin may switch its function to that of a nitrite (NO2) reductase (NiR), generating nitric oxide. Could also have peroxidase and superoxide dismutase activities, detoxifying reactive oxygen species and protecting cells against oxidative stress. Also binds dioxygen with low affinity and could function as an oxygen sensor but has probably no function as a respiratory oxygen carrier. The protein is Cytoglobin-2 of Danio rerio (Zebrafish).